The sequence spans 326 residues: Tetraacyldisaccharide 4'-kinase (326 aa).

54-61 (SVGGTGKT) provides a ligand contact to ATP.

The protein belongs to the LpxK family.

It carries out the reaction a lipid A disaccharide + ATP = a lipid IVA + ADP + H(+). Its pathway is glycolipid biosynthesis; lipid IV(A) biosynthesis; lipid IV(A) from (3R)-3-hydroxytetradecanoyl-[acyl-carrier-protein] and UDP-N-acetyl-alpha-D-glucosamine: step 6/6. Transfers the gamma-phosphate of ATP to the 4'-position of a tetraacyldisaccharide 1-phosphate intermediate (termed DS-1-P) to form tetraacyldisaccharide 1,4'-bis-phosphate (lipid IVA). In Rickettsia canadensis (strain McKiel), this protein is Tetraacyldisaccharide 4'-kinase.